Consider the following 190-residue polypeptide: Cysteine dioxygenase (190 aa).

The Fe cation site is built by histidine 78, histidine 80, and histidine 132. The segment at residues 85 to 149 (CFVKILDGEL…SNGAVSLHLY (65 aa)) is a cross-link (3'-(S-cysteinyl)-tyrosine (Cys-Tyr)).

It belongs to the cysteine dioxygenase family. The cofactor is Fe cation. The thioether cross-link between Cys-85 and Tyr-149 plays a structural role through stabilizing the Fe(2+) ion, and prevents the production of highly damaging free hydroxyl radicals by holding the oxygen radical via hydroxyl hydrogen.

The catalysed reaction is L-cysteine + O2 = 3-sulfino-L-alanine + H(+). It participates in organosulfur biosynthesis; taurine biosynthesis; hypotaurine from L-cysteine: step 1/2. The polypeptide is Cysteine dioxygenase (cdo-1) (Caenorhabditis briggsae).